A 274-amino-acid chain; its full sequence is Putative hydro-lyase SAV_6940 (274 aa).

This sequence belongs to the D-glutamate cyclase family.

The chain is Putative hydro-lyase SAV_6940 from Streptomyces avermitilis (strain ATCC 31267 / DSM 46492 / JCM 5070 / NBRC 14893 / NCIMB 12804 / NRRL 8165 / MA-4680).